Here is a 461-residue protein sequence, read N- to C-terminus: MFYCSKCNAPLQIDHSLQDANTGQLNLLTQNKQSVSAAAPKLNSVDFIPKERLELLEEVEKNGHNEPIHFLDTIEEHGTDSSPDHDSSPDASLVVNGGEIEEPVPVSAPSPESSEADGPNPISGRIHTLEKIFDILSNKGEVNHPMCDECAELLIENYKLKFDQNQREKDSYMTFLKKLKLKDDSDIKESDLDTKLRDSIQECRDLAASEQEKLQELRSLEQNREELSKELQDVKMELALQQSTELSNALRLKNELHWTLQRKADQLAQEKARYRVVLNRLDHLRNLNMYTKFFDIAADDQFGKINGFRLGYKVPWSEVNCALGQVVLLAVFLCKRLDVRLQSYKLVPMGSRSQIVKLSSDHDKSKTVLNLYSSNELSLGKLFNFNKLDVSMIALLDVLSQIEATVLALDSEIELPYTISPKKDVIGGKSIRVTSNSDWTFSCKFLLVNFKWILTYASSRH.

Basic and acidic residues predominate over residues 75-88 (EEHGTDSSPDHDSS). Disordered stretches follow at residues 75 to 94 (EEHGTDSSPDHDSSPDASLV) and 101 to 124 (EEPVPVSAPSPESSEADGPNPISG). Over residues 103 to 113 (PVPVSAPSPES) the composition is skewed to low complexity. A coiled-coil region spans residues 194-286 (TKLRDSIQEC…VLNRLDHLRN (93 aa)).

The protein belongs to the beclin family.

Required for cytoplasm to vacuole transport (Cvt) and autophagy. Also involved in endosome-to-Golgi retrograde transport. The polypeptide is Autophagy-related protein 6 (ATG6) (Meyerozyma guilliermondii (strain ATCC 6260 / CBS 566 / DSM 6381 / JCM 1539 / NBRC 10279 / NRRL Y-324) (Yeast)).